The chain runs to 305 residues: MAREDSVKCLRCLLYALNLLFWLMSISVLAVSAWMRDYLNNVLTLTAETRVEEAVILTYFPVVHPVMIAVCCFLIIVGMLGYCGTVKRNLLLLAWYFGSLLVIFCVELACGVWTYEQELMVPVQWSDMVTLKARMTNYGLPRYRWLTHAWNFFQREFKCCGVVYFTDWLEMTEMDWPPDSCCVREFPGCSKQAHQEDLSDLYQEGCGKKMYSFLRGTKQLQVLRFLGISIGVTQILAMILTITLLWALYYDRREPGTDQMMSLKNDNSQHLSCPSVELLKPSLSRIFEHTSMANSFNTHFEMEEL.

At 1–12 the chain is on the cytoplasmic side; that stretch reads MAREDSVKCLRC. Residues Cys9 and Cys12 are each lipidated (S-palmitoyl cysteine). Residues 13 to 33 traverse the membrane as a helical segment; sequence LLYALNLLFWLMSISVLAVSA. Residues 34–59 lie on the Extracellular side of the membrane; it reads WMRDYLNNVLTLTAETRVEEAVILTY. A helical membrane pass occupies residues 60–80; that stretch reads FPVVHPVMIAVCCFLIIVGML. The Cytoplasmic segment spans residues 81–89; it reads GYCGTVKRN. Cys83 carries the S-palmitoyl cysteine lipid modification. The helical transmembrane segment at 90–110 threads the bilayer; the sequence is LLLLAWYFGSLLVIFCVELAC. Topologically, residues 111-224 are extracellular; that stretch reads GVWTYEQELM…RGTKQLQVLR (114 aa). A helical membrane pass occupies residues 225–245; sequence FLGISIGVTQILAMILTITLL. Topologically, residues 246–305 are cytoplasmic; it reads WALYYDRREPGTDQMMSLKNDNSQHLSCPSVELLKPSLSRIFEHTSMANSFNTHFEMEEL.

This sequence belongs to the tetraspanin (TM4SF) family. As to quaternary structure, component of a complex, at least composed of TSPAN12, FZD4 and norrin (NDP). Interacts (when palmitoylated) with ADAM10. Interacts with MMP14/MT1-MMP. Post-translationally, palmitoylated; required for interaction with ADAM10. The precise position of palmitoylated residues is unclear and occurs either on Cys-9, Cys-12 and/or Cys-83.

The protein localises to the cell membrane. Regulator of cell surface receptor signal transduction. Plays a central role in retinal vascularization by regulating norrin (NDP) signal transduction. Acts in concert with norrin (NDP) to promote FZD4 multimerization and subsequent activation of FZD4, leading to promote accumulation of beta-catenin (CTNNB1) and stimulate LEF/TCF-mediated transcriptional programs. Suprisingly, it only activates the norrin (NDP)-dependent activation of FZD4, while it does not activate the Wnt-dependent activation of FZD4, suggesting the existence of a Wnt-independent signaling that also promote accumulation the beta-catenin (CTNNB1). Acts as a regulator of membrane proteinases such as ADAM10 and MMP14/MT1-MMP. Activates ADAM10-dependent cleavage activity of amyloid precursor protein (APP). Activates MMP14/MT1-MMP-dependent cleavage activity. This Homo sapiens (Human) protein is Tetraspanin-12 (TSPAN12).